A 377-amino-acid chain; its full sequence is 2-iminoacetate synthase (377 aa).

Positions 71–301 constitute a Radical SAM core domain; it reads NTVSFYVPLY…PEIELSLSTR (231 aa). The [4Fe-4S] cluster site is built by C85, C89, and C92.

The protein belongs to the radical SAM superfamily. ThiH family. In terms of assembly, forms a heterodimer with ThiG. [4Fe-4S] cluster is required as a cofactor.

It carries out the reaction L-tyrosine + S-adenosyl-L-methionine + NADPH = 2-iminoacetate + 4-methylphenol + 5'-deoxyadenosine + L-methionine + NADP(+). Its pathway is cofactor biosynthesis; thiamine diphosphate biosynthesis. Catalyzes the radical-mediated cleavage of tyrosine to 2-iminoacetate and 4-cresol. The protein is 2-iminoacetate synthase (thiH) of Salmonella typhimurium (strain LT2 / SGSC1412 / ATCC 700720).